Consider the following 896-residue polypeptide: Translation initiation factor IF-2 (896 aa).

Disordered regions lie at residues His-53–Lys-81 and Ala-117–Asp-301. Over residues Thr-60–Ala-79 the composition is skewed to polar residues. Residues Ala-117–Val-227 are compositionally biased toward basic and acidic residues. The span at Ala-254 to Gly-266 shows a compositional bias: low complexity. The span at Gly-273–Asn-282 shows a compositional bias: basic and acidic residues. Over residues Ala-283–Ser-294 the composition is skewed to low complexity. The tr-type G domain occupies Ser-394 to Lys-563. A G1 region spans residues Gly-403–Thr-410. Gly-403–Thr-410 is a GTP binding site. The segment at Gly-428–His-432 is G2. A G3 region spans residues Asp-449–Gly-452. GTP is bound by residues Asp-449–His-453 and Asn-503–Asp-506. Positions Asn-503 to Asp-506 are G4. The interval Ser-539–Lys-541 is G5.

The protein belongs to the TRAFAC class translation factor GTPase superfamily. Classic translation factor GTPase family. IF-2 subfamily.

It localises to the cytoplasm. One of the essential components for the initiation of protein synthesis. Protects formylmethionyl-tRNA from spontaneous hydrolysis and promotes its binding to the 30S ribosomal subunits. Also involved in the hydrolysis of GTP during the formation of the 70S ribosomal complex. The sequence is that of Translation initiation factor IF-2 from Shewanella sediminis (strain HAW-EB3).